A 102-amino-acid polypeptide reads, in one-letter code: Salivary protein Salp9 (102 aa).

The N-terminal stretch at 1-21 is a signal peptide; that stretch reads MGLTEIMLVLVSLAFVATAAA. Asn-26 and Asn-87 each carry an N-linked (GlcNAc...) asparagine glycan. Residues 83-102 form a disordered region; that stretch reads SGVPNDTDAKIEETEEELEA.

Belongs to the salp14 family. In terms of tissue distribution, salivary gland (at protein level). Saliva (at protein level). Midgut.

The protein localises to the secreted. Salivary protein that facilitates blood feeding of adult ticks on vertebrate species. Inhibits the lectin pathway of complement system activation in the host. This Ixodes scapularis (Black-legged tick) protein is Salivary protein Salp9.